The primary structure comprises 527 residues: uncharacterized protein (527 aa).

One can recognise a PE domain in the interval 1–93 (MSYMIAVPDM…AGAYASAEAT (93 aa)). Gly residues-rich tracts occupy residues 264–286 (IHGH…GVQG), 292–384 (GAAG…AGNG), and 472–515 (NGGD…GGSR). Disordered regions lie at residues 264 to 384 (IHGH…AGNG) and 472 to 527 (NGGD…TPGQ).

The protein belongs to the mycobacterial PE family. PGRS subfamily.

This is an uncharacterized protein from Mycobacterium tuberculosis (strain CDC 1551 / Oshkosh).